A 311-amino-acid chain; its full sequence is uncharacterized protein (311 aa).

This is an uncharacterized protein from Bacillus anthracis.